Here is an 88-residue protein sequence, read N- to C-terminus: Large ribosomal subunit protein bL27 (88 aa).

The segment at 1–23 is disordered; that stretch reads MAHKKAGGSSRNGRDSAGRRLGV.

This sequence belongs to the bacterial ribosomal protein bL27 family.

This is Large ribosomal subunit protein bL27 from Methylorubrum populi (strain ATCC BAA-705 / NCIMB 13946 / BJ001) (Methylobacterium populi).